The chain runs to 146 residues: Large ribosomal subunit protein uL15 (146 aa).

Residues 1 to 18 (MKLHELKPSEGSRKERNR) are compositionally biased toward basic and acidic residues. The disordered stretch occupies residues 1 to 50 (MKLHELKPSEGSRKERNRVGRGTGSGNGKTSGRGHKGQKARSGGGVRLGF). Gly residues predominate over residues 21-31 (RGTGSGNGKTS).

This sequence belongs to the universal ribosomal protein uL15 family. Part of the 50S ribosomal subunit.

Functionally, binds to the 23S rRNA. The protein is Large ribosomal subunit protein uL15 of Listeria welshimeri serovar 6b (strain ATCC 35897 / DSM 20650 / CCUG 15529 / CIP 8149 / NCTC 11857 / SLCC 5334 / V8).